Here is a 403-residue protein sequence, read N- to C-terminus: Peroxisomal membrane protein PEX13 (403 aa).

A compositionally biased stretch (pro residues) spans 1-11; that stretch reads MASQPPPPPKP. The segment at 1 to 69 is disordered; the sequence is MASQPPPPPK…SQQTGGNNVN (69 aa). The Peroxisomal matrix portion of the chain corresponds to 1–134; it reads MASQPPPPPK…SSRGAFQSIE (134 aa). Over residues 59–69 the composition is skewed to polar residues; that stretch reads PSQQTGGNNVN. A helical membrane pass occupies residues 135–155; sequence SIVHAFASVSMMMDATFSAVY. Residues 145 to 233 are targeting to peroxisomes; sequence MMMDATFSAV…EDQANNSAKS (89 aa). The Cytoplasmic portion of the chain corresponds to 156 to 174; that stretch reads NSFRAVLDVANHFSRLKIH. A helical membrane pass occupies residues 175 to 192; that stretch reads FTKVFSAFALVRTIRYLY. The tract at residues 175–196 is interaction with PEX19; the sequence is FTKVFSAFALVRTIRYLYRRLQ. The Peroxisomal matrix portion of the chain corresponds to 193-233; that stretch reads RRLQWMMGLRRGSENEDLWAESEGTVACLGAEDQANNSAKS. The chain crosses the membrane as a helical span at residues 234-254; sequence WPIFLFFAVILGGPYLIWKLL. Residues 255–403 are Cytoplasmic-facing; that stretch reads STHSDEVTDS…TGKNGDKQDL (149 aa). Residues 272 to 336 enclose the SH3 domain; sequence DDHVVARAEY…PANYVKILGK (65 aa). Disordered stretches follow at residues 341-364 and 381-403; these read KTVE…VKGV and FVET…KQDL. Positions 344-364 are enriched in polar residues; that stretch reads ESSTMPKQQQSFTNPTSVKGV.

It belongs to the peroxin-13 family. Interacts (via SH3 domain) with PEX14 (via SH3-binding motif); forming the PEX13-PEX14 docking complex. Interacts with PEX19.

It localises to the peroxisome membrane. Component of the PEX13-PEX14 docking complex, a translocon channel that specifically mediates the import of peroxisomal cargo proteins bound to PEX5 receptor. The PEX13-PEX14 docking complex forms a large import pore which can be opened to a diameter of about 9 nm. Mechanistically, PEX5 receptor along with cargo proteins associates with the PEX14 subunit of the PEX13-PEX14 docking complex in the cytosol, leading to the insertion of the receptor into the organelle membrane with the concomitant translocation of the cargo into the peroxisome matrix. Involved in the import of PTS1- and PTS2-type containing proteins. This chain is Peroxisomal membrane protein PEX13, found in Rattus norvegicus (Rat).